A 224-amino-acid polypeptide reads, in one-letter code: 7-cyano-7-deazaguanine synthase (224 aa).

10–20 (LSGGLDSATVV) serves as a coordination point for ATP. Positions 189, 199, 202, and 205 each coordinate Zn(2+).

Belongs to the QueC family. It depends on Zn(2+) as a cofactor.

It catalyses the reaction 7-carboxy-7-deazaguanine + NH4(+) + ATP = 7-cyano-7-deazaguanine + ADP + phosphate + H2O + H(+). The protein operates within purine metabolism; 7-cyano-7-deazaguanine biosynthesis. Its function is as follows. Catalyzes the ATP-dependent conversion of 7-carboxy-7-deazaguanine (CDG) to 7-cyano-7-deazaguanine (preQ(0)). The chain is 7-cyano-7-deazaguanine synthase from Stutzerimonas stutzeri (strain A1501) (Pseudomonas stutzeri).